A 335-amino-acid chain; its full sequence is Adenosine deaminase (335 aa).

2 residues coordinate Zn(2+): His12 and His14. The substrate site is built by His14 and Asp16. His197 contributes to the Zn(2+) binding site. Glu200 functions as the Proton donor in the catalytic mechanism. A Zn(2+)-binding site is contributed by Asp278.

The protein belongs to the metallo-dependent hydrolases superfamily. Adenosine and AMP deaminases family. Adenosine deaminase subfamily. Requires Zn(2+) as cofactor.

The catalysed reaction is adenosine + H2O + H(+) = inosine + NH4(+). It catalyses the reaction 2'-deoxyadenosine + H2O + H(+) = 2'-deoxyinosine + NH4(+). Its function is as follows. Catalyzes the hydrolytic deamination of adenosine and 2-deoxyadenosine. The sequence is that of Adenosine deaminase from Clostridium botulinum (strain Langeland / NCTC 10281 / Type F).